We begin with the raw amino-acid sequence, 1068 residues long: Carbamoyl phosphate synthase large chain (1068 aa).

A carboxyphosphate synthetic domain region spans residues 1-401 (MPLNKDIKKV…AFLKGTRSLE (401 aa)). ATP contacts are provided by R129, R169, G175, G176, K208, V210, E215, G241, I242, H243, Q284, and E298. One can recognise an ATP-grasp 1 domain in the interval 133-327 (RNVMSRINEP…IAKVASKIAL (195 aa)). 3 residues coordinate Mg(2+): Q284, E298, and N300. Residues Q284, E298, and N300 each coordinate Mn(2+). An oligomerization domain region spans residues 402-549 (IGKYSLEHKK…YSTYDVYDEV (148 aa)). The carbamoyl phosphate synthetic domain stretch occupies residues 550–932 (EVSKNKKVIV…ALYKGFIGAN (383 aa)). Residues 674–864 (DELLEKLKIA…IVDIATRVML (191 aa)) enclose the ATP-grasp 2 domain. The ATP site is built by R710, K749, L751, E755, G780, V781, H782, S783, Q823, and E835. Mg(2+) contacts are provided by Q823, E835, and N837. 3 residues coordinate Mn(2+): Q823, E835, and N837. Residues 933–1068 (ISIKKEKGTV…ETLYIFDLSN (136 aa)) enclose the MGS-like domain. The segment at 933–1068 (ISIKKEKGTV…ETLYIFDLSN (136 aa)) is allosteric domain.

The protein belongs to the CarB family. As to quaternary structure, composed of two chains; the small (or glutamine) chain promotes the hydrolysis of glutamine to ammonia, which is used by the large (or ammonia) chain to synthesize carbamoyl phosphate. Tetramer of heterodimers (alpha,beta)4. The cofactor is Mg(2+). Mn(2+) is required as a cofactor.

It carries out the reaction hydrogencarbonate + L-glutamine + 2 ATP + H2O = carbamoyl phosphate + L-glutamate + 2 ADP + phosphate + 2 H(+). The catalysed reaction is hydrogencarbonate + NH4(+) + 2 ATP = carbamoyl phosphate + 2 ADP + phosphate + 2 H(+). It functions in the pathway amino-acid biosynthesis; L-arginine biosynthesis; carbamoyl phosphate from bicarbonate: step 1/1. The protein operates within pyrimidine metabolism; UMP biosynthesis via de novo pathway; (S)-dihydroorotate from bicarbonate: step 1/3. Its function is as follows. Large subunit of the glutamine-dependent carbamoyl phosphate synthetase (CPSase). CPSase catalyzes the formation of carbamoyl phosphate from the ammonia moiety of glutamine, carbonate, and phosphate donated by ATP, constituting the first step of 2 biosynthetic pathways, one leading to arginine and/or urea and the other to pyrimidine nucleotides. The large subunit (synthetase) binds the substrates ammonia (free or transferred from glutamine from the small subunit), hydrogencarbonate and ATP and carries out an ATP-coupled ligase reaction, activating hydrogencarbonate by forming carboxy phosphate which reacts with ammonia to form carbamoyl phosphate. The chain is Carbamoyl phosphate synthase large chain from Clostridium botulinum (strain Langeland / NCTC 10281 / Type F).